The following is a 536-amino-acid chain: MATASVSFKSREDHRKQLELEEARKAGLAPAEVDEDGKEINPHIPQYMSSAPWYLNADKPSLKHQRNWKSDPNYTKSWYDRGAKLFQANKYRKGACENCGAMTHDKKSCMERPRSVGAKWTNINIAPDEKVESFELDYDGKRDRWNGYDPSTYTRVIADYEAREEARKKYLKEQQLKKLEEKDGEEGDENVASEEEDEEDGLKIDEAKVDESAQMDFAKVEKRVRTTGGGSTGTVRNLRIREDTAKYLLNLDVNSAYYDPKTRSMREDPLPDADPNDKFYVGDNQNRLSGQALEFKQLNIHAWEAFDKGQDIHMQAAPSQAELLFKSFKIKKEKLKSENKDKIMEKYGNAASEEPIPRELLLGQSEKEIEYDRTGRIIKGQDVALPKSKYEEDVFINNHTTVWGSWWKDHQWGYKCCKQTIRNSYCTGLAGIEAAEASADLMKANMARKEAAEDEPVRHEEKRLATWGTDVPNDIVLDKKLLDEALKKEGARRKEEMDERKRKYNVKWNDEVTAEDMEAYRMKRIHHDDPMRDFLH.

The interval 22-42 (EARKAGLAPAEVDEDGKEINP) is disordered. A CCHC-type zinc finger spans residues 94 to 111 (GACENCGAMTHDKKSCME). A disordered region spans residues 178-201 (KLEEKDGEEGDENVASEEEDEEDG). Over residues 182-200 (KDGEEGDENVASEEEDEED) the composition is skewed to acidic residues.

This sequence belongs to the SLU7 family.

It localises to the nucleus. Participates in the second catalytic step of pre-mRNA splicing, when the free hydroxyl group of exon I attacks the 3'-splice site to generate spliced mRNA and the excised lariat intron. The sequence is that of Pre-mRNA-splicing factor SLU7 from Oryza sativa subsp. indica (Rice).